Consider the following 263-residue polypeptide: Orotidine 5'-phosphate decarboxylase (263 aa).

Substrate is bound by residues D38, 60 to 62, 91 to 100, Y213, and R232; these read KTH and DRKFADIGNT. K93 acts as the Proton donor in catalysis.

It belongs to the OMP decarboxylase family.

The enzyme catalyses orotidine 5'-phosphate + H(+) = UMP + CO2. Its pathway is pyrimidine metabolism; UMP biosynthesis via de novo pathway; UMP from orotate: step 2/2. In Rhizomucor pusillus, this protein is Orotidine 5'-phosphate decarboxylase (PYR4).